We begin with the raw amino-acid sequence, 1011 residues long: Histone deacetylase 9 (1011 aa).

A Phosphoserine modification is found at serine 22. Residues 23–27 (PLDLR) form an interaction with CTBP1 region. Disordered regions lie at residues 110-139 (RQEQEVERHRREQQLPPLRGKDRGRERAVA), 183-249 (TSLD…KDGN), and 262-304 (TESS…EQMV). The segment at 136-154 (RAVASTEVKQKLQEFLLSK) is interaction with MEF2. The interaction with MAPK10 stretch occupies residues 175–343 (LWYTAAHHTS…LPAVPSQLNA (169 aa)). A compositionally biased stretch (polar residues) spans 185 to 199 (LDQSSPPLSGTSPSY). The span at 208–219 (DAKDDFPLRKTA) shows a compositional bias: basic and acidic residues. The interaction with ETV6 stretch occupies residues 218–261 (TASEPNLKVRSRLKQKVAERRSSPLLRRKDGNVVTSFKKRMFEV). Residues serine 220 and serine 240 each carry the phosphoserine modification. A compositionally biased stretch (basic and acidic residues) spans 233-248 (KVAERRSSPLLRRKDG). Positions 262 to 285 (TESSVSSSSPGSGPSSPNNGPTGS) are enriched in low complexity. Position 451 is a phosphoserine (serine 451). Positions 494 to 536 (QLKQPGSHLEEAEEELQGDQAMQEDRAPSSGNSTRSDSSACVD) are disordered. The span at 522–532 (SSGNSTRSDSS) shows a compositional bias: polar residues. Phosphoserine is present on serine 554. The interval 631–978 (SATGIAYDPL…VNALLGNELE (348 aa)) is histone deacetylase. Positions 646, 648, 654, and 731 each coordinate Zn(2+). Histidine 783 is a catalytic residue.

The protein belongs to the histone deacetylase family. HD type 2 subfamily. In terms of assembly, homodimer. Interacts with CTBP1. The phosphorylated form interacts with 14-3-3. Interacts with HDAC1 and HDAC3, and probably with HDAC4 and HDAC5. Interacts with MEF2, MAPK10, ETV6, NCOR1 and BCL6. Interacts with FOXP3 in the absence of T-cell stimulation. In terms of processing, phosphorylated on Ser-220 and Ser-450; which promotes 14-3-3-binding, impairs interaction with MEF2, and antagonizes antimyogenic activity. Phosphorylated on Ser-240; which impairs nuclear accumulation. Isoform 7 is phosphorylated on Tyr-1010. Phosphorylated by the PKC kinases PKN1 and PKN2, impairing nuclear import. Post-translationally, sumoylated. As to expression, broadly expressed, with highest levels in brain, heart, muscle and testis. Isoform 3 is present in human bladder carcinoma cells (at protein level).

It localises to the nucleus. It catalyses the reaction N(6)-acetyl-L-lysyl-[histone] + H2O = L-lysyl-[histone] + acetate. Inhibited by Trichostatin A (TSA) and suberoylanilide hydroxamic acid. Responsible for the deacetylation of lysine residues on the N-terminal part of the core histones (H2A, H2B, H3 and H4). Histone deacetylation gives a tag for epigenetic repression and plays an important role in transcriptional regulation, cell cycle progression and developmental events. Represses MEF2-dependent transcription. Functionally, isoform 3 lacks active site residues and therefore is catalytically inactive. Represses MEF2-dependent transcription by recruiting HDAC1 and/or HDAC3. Seems to inhibit skeletal myogenesis and to be involved in heart development. Protects neurons from apoptosis, both by inhibiting JUN phosphorylation by MAPK10 and by repressing JUN transcription via HDAC1 recruitment to JUN promoter. The sequence is that of Histone deacetylase 9 (HDAC9) from Homo sapiens (Human).